We begin with the raw amino-acid sequence, 527 residues long: Glutamate--cysteine ligase (527 aa).

Belongs to the glutamate--cysteine ligase type 1 family. Type 1 subfamily.

It carries out the reaction L-cysteine + L-glutamate + ATP = gamma-L-glutamyl-L-cysteine + ADP + phosphate + H(+). It functions in the pathway sulfur metabolism; glutathione biosynthesis; glutathione from L-cysteine and L-glutamate: step 1/2. The polypeptide is Glutamate--cysteine ligase (Pseudomonas aeruginosa (strain LESB58)).